Consider the following 575-residue polypeptide: Carboxylesterase 5A (575 aa).

The signal sequence occupies residues 1–28 (MSGDWVRPGQALIWVIWIFGAIIEGSVT). A disulfide bridge connects residues C94 and C121. An N-linked (GlcNAc...) asparagine glycan is attached at N134. S226 serves as the catalytic Acyl-ester intermediate. Cysteines 280 and 291 form a disulfide. N281 is a glycosylation site (N-linked (GlcNAc...) asparagine). E345 (charge relay system) is an active-site residue. N-linked (GlcNAc...) asparagine glycosylation is present at N363. H454 functions as the Charge relay system in the catalytic mechanism. The N-linked (GlcNAc...) asparagine glycan is linked to N524.

The protein belongs to the type-B carboxylesterase/lipase family. In terms of processing, N-glycosylated.

It localises to the secreted. The catalysed reaction is a carboxylic ester + H2O = an alcohol + a carboxylate + H(+). Involved in the detoxification of xenobiotics and in the activation of ester and amide prodrugs. The polypeptide is Carboxylesterase 5A (Ces5a) (Mus musculus (Mouse)).